A 113-amino-acid polypeptide reads, in one-letter code: UPF0122 protein Lreu_1156 (113 aa).

This sequence belongs to the UPF0122 family.

Might take part in the signal recognition particle (SRP) pathway. This is inferred from the conservation of its genetic proximity to ftsY/ffh. May be a regulatory protein. The protein is UPF0122 protein Lreu_1156 of Limosilactobacillus reuteri (strain DSM 20016) (Lactobacillus reuteri).